Consider the following 596-residue polypeptide: Chaperone protein DnaK (596 aa).

Thr180 bears the Phosphothreonine; by autocatalysis mark.

The protein belongs to the heat shock protein 70 family.

Acts as a chaperone. The polypeptide is Chaperone protein DnaK (Thermotoga neapolitana (strain ATCC 49049 / DSM 4359 / NBRC 107923 / NS-E)).